We begin with the raw amino-acid sequence, 361 residues long: Peptide chain release factor 1 (361 aa).

Glutamine 236 carries the post-translational modification N5-methylglutamine.

It belongs to the prokaryotic/mitochondrial release factor family. Methylated by PrmC. Methylation increases the termination efficiency of RF1.

The protein resides in the cytoplasm. In terms of biological role, peptide chain release factor 1 directs the termination of translation in response to the peptide chain termination codons UAG and UAA. This chain is Peptide chain release factor 1, found in Lactobacillus delbrueckii subsp. bulgaricus (strain ATCC 11842 / DSM 20081 / BCRC 10696 / JCM 1002 / NBRC 13953 / NCIMB 11778 / NCTC 12712 / WDCM 00102 / Lb 14).